A 113-amino-acid chain; its full sequence is Single-stranded DNA-binding protein B (113 aa).

In terms of domain architecture, SSB spans M1–D104. Phosphotyrosine is present on Y82.

As to quaternary structure, homotetramer. Phosphorylated by YwqD, which increases ssDNA affinity; dephosphorylated by YwqE.

It is found in the cytoplasm. In terms of biological role, not essential for replication of the chromosome, but is required for optimal competence. Binds ssDNA, binding is facilitated by DprA, acts as an accessory factor for homologous DNA strand exchange. The polypeptide is Single-stranded DNA-binding protein B (ssbB) (Bacillus subtilis (strain 168)).